Reading from the N-terminus, the 525-residue chain is ESX-1 secretion-associated protein EspE (525 aa).

Disordered regions lie at residues 244-341 and 375-494; these read AVAG…PGAA and ALQA…APVH. Acidic residues predominate over residues 248–258; sequence DADDTTADDTA. Basic and acidic residues predominate over residues 274-286; sequence ETSKEDGQSRHEN. Positions 292–306 are enriched in gly residues; sequence SGGGGGATSGGGGGA. Composition is skewed to low complexity over residues 307–319, 332–341, and 375–397; these read PSSA…AGTP, TPTDAQPGAA, and ALQA…AAAP. Basic and acidic residues predominate over residues 411 to 440; sequence DPDAEGDKDSDKRDGEGKEDGTAPRDREST.

The protein localises to the cytoplasm. This is ESX-1 secretion-associated protein EspE from Mycolicibacterium smegmatis (strain ATCC 700084 / mc(2)155) (Mycobacterium smegmatis).